A 163-amino-acid chain; its full sequence is uncharacterized protein (163 aa).

Residues 101-162 (LESMKVERKP…KMGERILERE (62 aa)) are a coiled coil.

This is an uncharacterized protein from Aquifex aeolicus (strain VF5).